The primary structure comprises 428 residues: Dihydroorotase (428 aa).

2 residues coordinate Zn(2+): His-59 and His-61. Substrate is bound by residues 61-63 (HLR) and Asn-93. 3 residues coordinate Zn(2+): Asp-151, His-178, and His-231. A substrate-binding site is contributed by Asn-277. Asp-304 contacts Zn(2+). Residue Asp-304 is part of the active site. Residues His-308 and 322-323 (FG) each bind substrate.

This sequence belongs to the metallo-dependent hydrolases superfamily. DHOase family. Class I DHOase subfamily. Zn(2+) serves as cofactor.

It catalyses the reaction (S)-dihydroorotate + H2O = N-carbamoyl-L-aspartate + H(+). The protein operates within pyrimidine metabolism; UMP biosynthesis via de novo pathway; (S)-dihydroorotate from bicarbonate: step 3/3. In terms of biological role, catalyzes the reversible cyclization of carbamoyl aspartate to dihydroorotate. The polypeptide is Dihydroorotase (Bacillus cytotoxicus (strain DSM 22905 / CIP 110041 / 391-98 / NVH 391-98)).